The sequence spans 61 residues: Small ribosomal subunit protein uS14 (61 aa).

The Zn(2+) site is built by C24, C27, C40, and C43.

Belongs to the universal ribosomal protein uS14 family. Zinc-binding uS14 subfamily. As to quaternary structure, part of the 30S ribosomal subunit. Contacts proteins S3 and S10. It depends on Zn(2+) as a cofactor.

In terms of biological role, binds 16S rRNA, required for the assembly of 30S particles and may also be responsible for determining the conformation of the 16S rRNA at the A site. In Mesomycoplasma hyopneumoniae (strain 232) (Mycoplasma hyopneumoniae), this protein is Small ribosomal subunit protein uS14.